Reading from the N-terminus, the 328-residue chain is Nicotianamine synthase 1 (328 aa).

The protein belongs to the nicotianamine synthase (NAS)-like family. As to expression, in roots but not in leaves.

It catalyses the reaction 3 S-adenosyl-L-methionine = nicotianamine + 3 S-methyl-5'-thioadenosine + 3 H(+). Functionally, synthesizes nicotianamine, a polyamine that is the first intermediate in the synthesis of the phytosiderophores of the mugineic acid type found in gramineae which serves as a sensor for the physiological iron status within the plant, and/or might be involved in the transport of iron. This chain is Nicotianamine synthase 1 (NAS1), found in Hordeum vulgare (Barley).